A 2236-amino-acid chain; its full sequence is uncharacterized protein (2236 aa).

Spectrin repeat units follow at residues 46–146 (QVYL…RQLE) and 238–335 (QKFV…TDIE). Coiled coils occupy residues 496–541 (VVEQ…TVNS) and 603–631 (DDQQKNMANEELRKTYENLKKIEMEVGRQ). Spectrin repeat units lie at residues 839 to 949 (YEYD…KTLK), 1048 to 1146 (KKLE…KRME), 1261 to 1361 (LGAE…VDLN), 1367 to 1459 (ILID…KSLA), and 1562 to 1667 (QKVV…NRLE). Residues 1835 to 1869 (QNSTDAEKKLSLVSERLNALKKQLDLLAEKIAVDD) are a coiled coil. EF-hand domains lie at 2104–2139 (KQLHEFELAFDYFDRERNGWLDYKHFELCLKSQGYN) and 2141–2176 (SAENTLKETMTLLDPSTTGHIQKHDYVRYMVKHETT). Ca(2+)-binding residues include aspartate 2154, serine 2156, threonine 2158, histidine 2160, and aspartate 2165.

It belongs to the spectrin family.

This is an uncharacterized protein from Caenorhabditis elegans.